A 114-amino-acid polypeptide reads, in one-letter code: Aspartate 1-decarboxylase (114 aa).

The active-site Schiff-base intermediate with substrate; via pyruvic acid is Ser-25. Ser-25 bears the Pyruvic acid (Ser) mark. Thr-57 lines the substrate pocket. The Proton donor role is filled by Tyr-58. 71 to 73 is a binding site for substrate; that stretch reads GAA.

It belongs to the PanD family. Heterooctamer of four alpha and four beta subunits. Pyruvate is required as a cofactor. Post-translationally, is synthesized initially as an inactive proenzyme, which is activated by self-cleavage at a specific serine bond to produce a beta-subunit with a hydroxyl group at its C-terminus and an alpha-subunit with a pyruvoyl group at its N-terminus.

The protein resides in the cytoplasm. It catalyses the reaction L-aspartate + H(+) = beta-alanine + CO2. Its pathway is cofactor biosynthesis; (R)-pantothenate biosynthesis; beta-alanine from L-aspartate: step 1/1. In terms of biological role, catalyzes the pyruvoyl-dependent decarboxylation of aspartate to produce beta-alanine. The sequence is that of Aspartate 1-decarboxylase from Haloquadratum walsbyi (strain DSM 16790 / HBSQ001).